The chain runs to 1209 residues: Zinc finger protein 804A (1209 aa).

The C2H2-type zinc-finger motif lies at 57–81; that stretch reads FYCELCDKQYYKHQEFDNHINSYDH. Residues 380-394 show a composition bias toward basic and acidic residues; sequence VKHNEASTTEVENKN. Disordered regions lie at residues 380–401 and 792–860; these read VKHNEASTTEVENKNGPETLAP and PEEF…MKPQ. A compositionally biased stretch (basic residues) spans 807 to 819; that stretch reads KPKKKRRRKRGRF. Basic and acidic residues-rich tracts occupy residues 826–836 and 848–860; these read LELKENTDYPV and LISEDKKEKMKPQ.

The chain is Zinc finger protein 804A (ZNF804A) from Homo sapiens (Human).